Here is a 94-residue protein sequence, read N- to C-terminus: Co-chaperonin GroES (94 aa).

A disordered region spans residues 17–53 (DSNPNSPIQLPDSAKKKPTKGKVVSVGPGASNSDGKV).

This sequence belongs to the GroES chaperonin family. As to quaternary structure, heptamer of 7 subunits arranged in a ring. Interacts with the chaperonin GroEL.

It localises to the cytoplasm. Functionally, together with the chaperonin GroEL, plays an essential role in assisting protein folding. The GroEL-GroES system forms a nano-cage that allows encapsulation of the non-native substrate proteins and provides a physical environment optimized to promote and accelerate protein folding. GroES binds to the apical surface of the GroEL ring, thereby capping the opening of the GroEL channel. This chain is Co-chaperonin GroES, found in Anaplasma phagocytophilum (strain HZ).